Consider the following 329-residue polypeptide: Uroporphyrinogen decarboxylase (329 aa).

Substrate contacts are provided by residues 22–26, Asp-71, Tyr-140, Ser-195, and His-307; that span reads RQVGR.

Belongs to the uroporphyrinogen decarboxylase family. In terms of assembly, homodimer.

It is found in the cytoplasm. The enzyme catalyses uroporphyrinogen III + 4 H(+) = coproporphyrinogen III + 4 CO2. Its pathway is porphyrin-containing compound metabolism; protoporphyrin-IX biosynthesis; coproporphyrinogen-III from 5-aminolevulinate: step 4/4. In terms of biological role, catalyzes the decarboxylation of four acetate groups of uroporphyrinogen-III to yield coproporphyrinogen-III. The chain is Uroporphyrinogen decarboxylase from Chlamydia pneumoniae (Chlamydophila pneumoniae).